The chain runs to 217 residues: Adenylate kinase (217 aa).

Position 10 to 15 (10 to 15 (GAGKGT)) interacts with ATP. The segment at 30–59 (STGDMLRAAVKAGTPLGLQAKDIMASGGLV) is NMP. AMP is bound by residues Thr31, Arg36, 57–59 (GLV), 85–88 (GFPR), and Gln92. The segment at 122 to 159 (GRRVHEASGRVYHIIHNAPRVEGHDDVTGEPLVQRPDD) is LID. ATP is bound by residues Arg123 and 132 to 133 (VY). AMP contacts are provided by Arg156 and Arg167. Gly203 contacts ATP.

This sequence belongs to the adenylate kinase family. As to quaternary structure, monomer.

The protein localises to the cytoplasm. The enzyme catalyses AMP + ATP = 2 ADP. Its pathway is purine metabolism; AMP biosynthesis via salvage pathway; AMP from ADP: step 1/1. Functionally, catalyzes the reversible transfer of the terminal phosphate group between ATP and AMP. Plays an important role in cellular energy homeostasis and in adenine nucleotide metabolism. The sequence is that of Adenylate kinase from Cellvibrio japonicus (strain Ueda107) (Pseudomonas fluorescens subsp. cellulosa).